The following is a 157-amino-acid chain: Thioredoxin-T (157 aa).

The Thioredoxin domain maps to 2–107 (VYPVRNKDDL…LAKLMEKHAG (106 aa)). A disulfide bridge connects residues Cys-32 and Cys-35. Residues 132-157 (ESSESDNDNNNVNEVSAHDENAVLEH) are disordered. Over residues 147 to 157 (SAHDENAVLEH) the composition is skewed to basic and acidic residues.

Belongs to the thioredoxin family. In terms of tissue distribution, testis specific. Not expressed in the embryo. Becomes progressively more strongly expressed during larval and pupal development. In testis, it is strongly expressed in young spermatocytes, and postmeiotic spermatid stages, then expression decreases at the nuclear elongation stage. Strongly expressed in the waste bag, in which material no longer needed for the mature sperm is eliminated. Not expressed in the stem cells and spermatogonial cells.

Its subcellular location is the nucleus. It localises to the chromosome. Probably participates in various redox reactions through the reversible oxidation of its active center dithiol to a disulfide and catalyzes dithiol-disulfide exchange reactions. Its tissue specificity suggests a regulatory role in the germline. This chain is Thioredoxin-T (TrxT), found in Drosophila melanogaster (Fruit fly).